The sequence spans 119 residues: Flagellar transcriptional regulator FlhD (119 aa).

The protein belongs to the FlhD family. In terms of assembly, homodimer; disulfide-linked. Forms a heterohexamer composed of two FlhC and four FlhD subunits. Each FlhC binds a FlhD dimer, forming a heterotrimer, and a hexamer assembles by dimerization of two heterotrimers.

The protein resides in the cytoplasm. Functionally, functions in complex with FlhC as a master transcriptional regulator that regulates transcription of several flagellar and non-flagellar operons by binding to their promoter region. Activates expression of class 2 flagellar genes, including fliA, which is a flagellum-specific sigma factor that turns on the class 3 genes. Also regulates genes whose products function in a variety of physiological pathways. The polypeptide is Flagellar transcriptional regulator FlhD (Escherichia fergusonii (strain ATCC 35469 / DSM 13698 / CCUG 18766 / IAM 14443 / JCM 21226 / LMG 7866 / NBRC 102419 / NCTC 12128 / CDC 0568-73)).